The following is a 129-amino-acid chain: Small ribosomal subunit protein uS11 (129 aa).

The protein belongs to the universal ribosomal protein uS11 family. As to quaternary structure, part of the 30S ribosomal subunit. Interacts with proteins S7 and S18. Binds to IF-3.

Located on the platform of the 30S subunit, it bridges several disparate RNA helices of the 16S rRNA. Forms part of the Shine-Dalgarno cleft in the 70S ribosome. The protein is Small ribosomal subunit protein uS11 of Roseobacter denitrificans (strain ATCC 33942 / OCh 114) (Erythrobacter sp. (strain OCh 114)).